The following is a 218-amino-acid chain: CD99 antigen-like protein 2 (218 aa).

The signal sequence occupies residues 1-25 (MVAWRSAFLVCLAFSLATLVQRGSG). At 26 to 136 (DFDDFNLKDA…PGSGMVAETG (111 aa)) the chain is on the extracellular side. Residues 72–128 (LADALDDRNDRDDGRRKPIAGGGGFSDKDLEDIVGGGEYKPDKGKGDGRYGSNDDPG) are disordered. 2 stretches are compositionally biased toward basic and acidic residues: residues 76–87 (LDDRNDRDDGRR) and 110–119 (YKPDKGKGDG). Ser129 carries an O-linked (Xyl...) (chondroitin sulfate) serine glycan. Residues 137–157 (TIAGVASALAMALIGAVSSYI) form a helical membrane-spanning segment. Residues 158–218 (SYQQKKFCFS…EPPPSEPARI (61 aa)) lie on the Cytoplasmic side of the membrane.

Belongs to the CD99 family. In terms of processing, O-glycosylated.

Its subcellular location is the cell membrane. It localises to the cell junction. It is found in the secreted. Plays a role in a late step of leukocyte extravasation helping cells to overcome the endothelial basement membrane. Acts at the same site as, but independently of, PECAM1. Homophilic adhesion molecule, but these interactions may not be required for cell aggregation. This Pongo abelii (Sumatran orangutan) protein is CD99 antigen-like protein 2 (CD99L2).